Reading from the N-terminus, the 30-residue chain is Trypsin inhibitor 6 (30 aa).

Disulfide bonds link Cys4–Cys21, Cys11–Cys23, and Cys17–Cys29.

Belongs to the protease inhibitor I7 (squash-type serine protease inhibitor) family.

Its subcellular location is the secreted. Its function is as follows. Strongly inhibits trypsin, weakly inhibits chymotrypsin. The sequence is that of Trypsin inhibitor 6 from Cyclanthera pedata (Achocha).